The chain runs to 710 residues: PC3-like endoprotease variant B (710 aa).

The N-terminal stretch at methionine 1–threonine 29 is a signal peptide. 3 N-linked (GlcNAc...) asparagine glycosylation sites follow: asparagine 23, asparagine 62, and asparagine 190. Residues valine 30–arginine 152 constitute a propeptide that is removed on maturation. The Peptidase S8 domain occupies methionine 164–valine 486. Active-site charge relay system residues include aspartate 202 and histidine 242. 2 cysteine pairs are disulfide-bonded: cysteine 259/cysteine 411 and cysteine 351/cysteine 381. Serine 419 functions as the Charge relay system in the catalytic mechanism. Positions leucine 495–lysine 638 constitute a P/Homo B domain. A disulfide bridge links cysteine 501 with cysteine 527. A disordered region spans residues threonine 668–glutamine 710. Basic and acidic residues predominate over residues threonine 673 to lysine 684. A compositionally biased stretch (low complexity) spans asparagine 689 to asparagine 699. N-linked (GlcNAc...) asparagine glycosylation is found at asparagine 698 and asparagine 699.

The protein belongs to the peptidase S8 family. Furin subfamily. As to expression, predominantly in the body column.

In terms of biological role, probably involved in the processing of hormone and other protein precursors at sites comprised of pairs of basic amino acid residues. This is PC3-like endoprotease variant B from Hydra vulgaris (Hydra).